We begin with the raw amino-acid sequence, 301 residues long: Ribosomal protein L11 methyltransferase (301 aa).

The S-adenosyl-L-methionine site is built by threonine 146, glycine 167, aspartate 189, and asparagine 237.

The protein belongs to the methyltransferase superfamily. PrmA family.

Its subcellular location is the cytoplasm. The enzyme catalyses L-lysyl-[protein] + 3 S-adenosyl-L-methionine = N(6),N(6),N(6)-trimethyl-L-lysyl-[protein] + 3 S-adenosyl-L-homocysteine + 3 H(+). Its function is as follows. Methylates ribosomal protein L11. The protein is Ribosomal protein L11 methyltransferase of Prochlorococcus marinus (strain MIT 9313).